The sequence spans 283 residues: Methyltransferase cpsF (283 aa).

The protein belongs to the methyltransferase superfamily. LaeA methyltransferase family.

The enzyme catalyses campesine A + S-adenosyl-L-methionine = campesine B + S-adenosyl-L-homocysteine + H(+). The protein operates within alkaloid biosynthesis. In terms of biological role, methyltransferase; part of the gene cluster that mediates the biosynthesis of campesine G, a dimeric indole piperazine alkaloid that shows good insecticidal activity Galleria mellonella. Within the pathway, cpsF methylates campesine A at N13 of piperazine ring to produce campesine B. The non-canonical non-ribosomal peptide synthetase cpsA catalyzes the first steps of the pathway by producing L-tryptophanal and L-valinal from their respective amino-acids. These products condensate spontaneously to form trypyl-valyl pyrazine also known as didehydrocampesine A. The NmrA-like family domain-containing oxidoreductase cpsB is the next enzyme in cps pathway and reduces the unstable didehydrocampesine A to campesine A. The methyltransferase cpsF and the acetyltransferase cpsE both recognize N13 of piperazine ring to carry out methylation and acetylation of campesine A to produce campesine C and B, respectively. The cytochrome P450 monooxygenase cpsD then acts as a dimerase that catalyzes oxidative heterocoupling between campesine B and C to produce heterodimers with unexpected 6/5/6/6/6/6/5/6 eight-ring scaffold called campesine D. Finally,the cytochrome P450 monooxygenase cpsC is a regioselective dehydrogenase that catalyzes dehydrogenation reaction towards C2-N1 to produce campesine G. The protein is Methyltransferase cpsF of Aspergillus campestris (strain IBT 28561).